A 132-amino-acid chain; its full sequence is Large ribosomal subunit protein uL24 (132 aa).

It belongs to the universal ribosomal protein uL24 family. Part of the 50S ribosomal subunit.

Its function is as follows. One of two assembly initiator proteins, it binds directly to the 5'-end of the 23S rRNA, where it nucleates assembly of the 50S subunit. One of the proteins that surrounds the polypeptide exit tunnel on the outside of the subunit. This is Large ribosomal subunit protein uL24 from Synechococcus sp. (strain JA-2-3B'a(2-13)) (Cyanobacteria bacterium Yellowstone B-Prime).